The primary structure comprises 493 residues: Ectonucleotide pyrophosphatase/phosphodiesterase 2 (493 aa).

Residues 1 to 28 are Cytoplasmic-facing; sequence MLLFEQPVDLEKNNEDDTNIKPFAISRH. The helical; Signal-anchor for type II membrane protein transmembrane segment at 29 to 45 threads the bilayer; sequence FLLKLLLCGIILIELLL. Residues 46–493 lie on the Extracellular side of the membrane; it reads YSKCPKPIDN…KTKKEKSLLQ (448 aa). Residues N62, N69, and N112 are each glycosylated (N-linked (GlcNAc...) asparagine). The phosphodiesterase stretch occupies residues 76 to 438; sequence TLTILISIDG…IGIMGTHGYN (363 aa). Residue T127 is the Nucleophile of the active site. N153 and N441 each carry an N-linked (GlcNAc...) asparagine glycan.

This sequence belongs to the nucleotide pyrophosphatase/phosphodiesterase family. Post-translationally, autophosphorylated as part of the catalytic cycle of phosphodiesterase/pyrophosphatase activity.

It is found in the membrane. The enzyme catalyses Hydrolytically removes 5'-nucleotides successively from the 3'-hydroxy termini of 3'-hydroxy-terminated oligonucleotides.. It carries out the reaction a ribonucleoside 5'-triphosphate + H2O = a ribonucleoside 5'-phosphate + diphosphate + H(+). It catalyses the reaction a 2'-deoxyribonucleoside 5'-triphosphate + H2O = a 2'-deoxyribonucleoside 5'-phosphate + diphosphate + H(+). Its function is as follows. Mediates extracellular nucleotide derived phosphate hydrolysis along with NPP1 and PHO5. The sequence is that of Ectonucleotide pyrophosphatase/phosphodiesterase 2 (NPP2) from Saccharomyces cerevisiae (strain ATCC 204508 / S288c) (Baker's yeast).